A 901-amino-acid polypeptide reads, in one-letter code: Bifunctional protein STORR (901 aa).

A helical transmembrane segment spans residues 12–32; it reads TSSVVALLLALVSILSSVVVL. Residue C513 participates in heme binding.

This sequence in the N-terminal section; belongs to the cytochrome P450 family. In the C-terminal section; belongs to the aldo/keto reductase family. Heme is required as a cofactor.

Its subcellular location is the membrane. The enzyme catalyses (R)-reticuline + NADP(+) = 1,2-dehydroreticuline + NADPH + H(+). It carries out the reaction (S)-reticuline + reduced [NADPH--hemoprotein reductase] + O2 = 1,2-dehydroreticuline + oxidized [NADPH--hemoprotein reductase] + 2 H2O + H(+). It functions in the pathway alkaloid biosynthesis; morphine biosynthesis. Its function is as follows. Bifunctional protein involved in the biosynthesis of morphinan-type benzylisoquinoline alkaloids. Required for the isomerization of (S)- to (R)-reticuline. The cytochrome P450 module is responsible for the conversion of (S)-reticuline to 1,2-dehydroreticuline while the oxidoreductase module converts 1,2-dehydroreticuline to (R)-reticuline. The polypeptide is Bifunctional protein STORR (Papaver somniferum (Opium poppy)).